Here is a 202-residue protein sequence, read N- to C-terminus: Zinc metalloproteinase barnettlysin-1 (202 aa).

The 195-residue stretch at 6-200 (RYVELFIVVD…MKENPQCILN (195 aa)) folds into the Peptidase M12B domain. Residues Glu-9 and Asp-93 each coordinate Ca(2+). 3 disulfide bridges follow: Cys-117-Cys-197, Cys-157-Cys-181, and Cys-159-Cys-164. His-142 serves as a coordination point for Zn(2+). The active site involves Glu-143. Zn(2+)-binding residues include His-146 and His-152. Ca(2+) contacts are provided by Cys-197 and Asn-200.

Monomer. Requires Zn(2+) as cofactor. Expressed by the venom gland.

It is found in the secreted. In terms of biological role, non-hemorrhagic metalloproteinase that hydrolyzes the alpha chains of fibrinogen and fibrin but has no activity on beta- and gamma-chains. Cleaves X-Leu bonds. Inhibits platelet aggregation induced by the von Willebrand factor (VWF) (IC(50) is 1.4 uM) and type I collagen (IC(50) is 3.2 uM). Acts by cleaving the vWF and its receptor GPIb, and by cleaving the collagen-binding Alpha-2A domain of the collagen receptor alpha-2/beta-1 integrin (ITGA2/ITGB1). Also degrades the extracellular matrix protein fibronectin (FN1), but has no effect on laminin and type I collagen. The polypeptide is Zinc metalloproteinase barnettlysin-1 (Bothrops barnetti (Barnett's lancehead)).